A 181-amino-acid chain; its full sequence is ATP synthase subunit b, chloroplastic (181 aa).

Residues 28–50 (IINLSVVLGVLIYFGKGVLSNLL) traverse the membrane as a helical segment.

It belongs to the ATPase B chain family. In terms of assembly, F-type ATPases have 2 components, F(1) - the catalytic core - and F(0) - the membrane proton channel. F(1) has five subunits: alpha(3), beta(3), gamma(1), delta(1), epsilon(1). F(0) has four main subunits: a(1), b(1), b'(1) and c(10-14). The alpha and beta chains form an alternating ring which encloses part of the gamma chain. F(1) is attached to F(0) by a central stalk formed by the gamma and epsilon chains, while a peripheral stalk is formed by the delta, b and b' chains.

It localises to the plastid. Its subcellular location is the chloroplast thylakoid membrane. Functionally, f(1)F(0) ATP synthase produces ATP from ADP in the presence of a proton or sodium gradient. F-type ATPases consist of two structural domains, F(1) containing the extramembraneous catalytic core and F(0) containing the membrane proton channel, linked together by a central stalk and a peripheral stalk. During catalysis, ATP synthesis in the catalytic domain of F(1) is coupled via a rotary mechanism of the central stalk subunits to proton translocation. Component of the F(0) channel, it forms part of the peripheral stalk, linking F(1) to F(0). The sequence is that of ATP synthase subunit b, chloroplastic from Cryptomeria japonica (Japanese cedar).